The following is a 297-amino-acid chain: Vacuolar protein sorting-associated protein 26C (297 aa).

Belongs to the VPS26 family. Component of the commander complex that is essential for endosomal recycling of transmembrane cargos; the commander complex is composed of the CCC subcomplex and the retriever subcomplex. Component of the heterotrimeric retriever complex consisting of VPS26C, VPS29 and VPS35L; within the complex interacts with VPS35L. Interacts with SNX17 (via C-terminus); the interaction is direct and associates SNX17 with the retriever complex. Interacts with SNX31; the interaction is direct. In terms of tissue distribution, ubiquitously expressed.

The protein resides in the endosome. In terms of biological role, component of the commander complex that is essential for endosomal recycling of transmembrane cargos; the commander complex is composed of the CCC subcomplex and the retriever subcomplex. Component of the retriever complex, which is a heterotrimeric complex related to retromer cargo-selective complex (CSC) and essential for retromer-independent retrieval and recycling of numerous cargos such as integrin alpha-5/beta-1 (ITGA5:ITGB1). The recruitment of the retriever complex to the endosomal membrane involves CCC and WASH complexes. In the endosomes, drives the retriever and recycling of NxxY-motif-containing cargo proteins by coupling to SNX17, a cargo essential for the homeostatic maintenance of numerous cell surface proteins associated with processes that include cell migration, cell adhesion, nutrient supply and cell signaling. (Microbial infection) The heterotrimeric retriever complex, in collaboration with the CCC complex, mediates the exit of human papillomavirus to the cell surface. This is Vacuolar protein sorting-associated protein 26C from Homo sapiens (Human).